The sequence spans 529 residues: Peptide chain release factor 3 (529 aa).

Positions 11–280 (AKRRTFAIIS…GLVEWAPAPM (270 aa)) constitute a tr-type G domain. GTP contacts are provided by residues 20–27 (SHPDAGKT), 88–92 (DTPGH), and 142–145 (NKLD).

This sequence belongs to the TRAFAC class translation factor GTPase superfamily. Classic translation factor GTPase family. PrfC subfamily.

It localises to the cytoplasm. Functionally, increases the formation of ribosomal termination complexes and stimulates activities of RF-1 and RF-2. It binds guanine nucleotides and has strong preference for UGA stop codons. It may interact directly with the ribosome. The stimulation of RF-1 and RF-2 is significantly reduced by GTP and GDP, but not by GMP. The protein is Peptide chain release factor 3 of Salmonella arizonae (strain ATCC BAA-731 / CDC346-86 / RSK2980).